Reading from the N-terminus, the 606-residue chain is Prostaglandin G/H synthase 1 (606 aa).

The signal sequence occupies residues 1 to 30 (MSRSSPSLRLPVLLLLLLLLLLPPPPPVLP). Residues 38–76 (PVNPCCYFPCQHQGVCVRVALDRYQCDCTRTGYSGPNCT) enclose the EGF-like domain. 4 disulfides stabilise this stretch: Cys-42-Cys-53, Cys-43-Cys-165, Cys-47-Cys-63, and Cys-65-Cys-75. N-linked (GlcNAc...) asparagine glycans are attached at residues Asn-74, Asn-110, and Asn-150. The Proton acceptor role is filled by His-213. The For cyclooxygenase activity role is filled by Tyr-391. His-394 provides a ligand contact to heme b. N-linked (GlcNAc...) asparagine glycosylation occurs at Asn-416. A disulfide bond links Cys-575 and Cys-581.

Belongs to the prostaglandin G/H synthase family. In terms of assembly, homodimer. Requires heme b as cofactor.

The protein localises to the microsome membrane. It is found in the endoplasmic reticulum membrane. The enzyme catalyses (5Z,8Z,11Z,14Z)-eicosatetraenoate + AH2 + 2 O2 = prostaglandin H2 + A + H2O. The catalysed reaction is (5Z,8Z,11Z,14Z)-eicosatetraenoate + 2 O2 = prostaglandin G2. It carries out the reaction prostaglandin G2 + AH2 = prostaglandin H2 + A + H2O. It catalyses the reaction (9Z,12Z)-octadecadienoate + AH2 + O2 = (9R)-hydroxy-(10E,12Z)-octadecadienoate + A + H2O. The enzyme catalyses (9Z,12Z)-octadecadienoate + AH2 + O2 = (9S)-hydroxy-(10E,12Z)-octadecadienoate + A + H2O. The catalysed reaction is (9Z,12Z)-octadecadienoate + AH2 + O2 = (13S)-hydroxy-(9Z,11E)-octadecadienoate + A + H2O. It carries out the reaction (9Z,12Z)-octadecadienoate + AH2 + O2 = (13R)-hydroxy-(9Z,11E)-octadecadienoate + A + H2O. Its pathway is lipid metabolism; prostaglandin biosynthesis. The cyclooxygenase activity is inhibited by nonsteroidal anti-inflammatory drugs (NSAIDs) including ibuprofen, flurbiprofen, ketoprofen, naproxen, flurbiprofen, anirolac, fenclofenac and diclofenac. Its function is as follows. Dual cyclooxygenase and peroxidase that plays an important role in the biosynthesis pathway of prostanoids, a class of C20 oxylipins mainly derived from arachidonate ((5Z,8Z,11Z,14Z)-eicosatetraenoate, AA, C20:4(n-6)), with a particular role in the inflammatory response. The cyclooxygenase activity oxygenates AA to the hydroperoxy endoperoxide prostaglandin G2 (PGG2), and the peroxidase activity reduces PGG2 to the hydroxy endoperoxide prostaglandin H2 (PGH2), the precursor of all 2-series prostaglandins and thromboxanes. This complex transformation is initiated by abstraction of hydrogen at carbon 13 (with S-stereochemistry), followed by insertion of molecular O2 to form the endoperoxide bridge between carbon 9 and 11 that defines prostaglandins. The insertion of a second molecule of O2 (bis-oxygenase activity) yields a hydroperoxy group in PGG2 that is then reduced to PGH2 by two electrons. Involved in the constitutive production of prostanoids in particular in the stomach and platelets. In gastric epithelial cells, it is a key step in the generation of prostaglandins, such as prostaglandin E2 (PGE2), which plays an important role in cytoprotection. In platelets, it is involved in the generation of thromboxane A2 (TXA2), which promotes platelet activation and aggregation, vasoconstriction and proliferation of vascular smooth muscle cells. Can also use linoleate (LA, (9Z,12Z)-octadecadienoate, C18:2(n-6)) as substrate and produce hydroxyoctadecadienoates (HODEs) in a regio- and stereospecific manner, being (9R)-HODE ((9R)-hydroxy-(10E,12Z)-octadecadienoate) and (13S)-HODE ((13S)-hydroxy-(9Z,11E)-octadecadienoate) its major products. This is Prostaglandin G/H synthase 1 (PTGS1) from Oryctolagus cuniculus (Rabbit).